Consider the following 201-residue polypeptide: Outer-membrane lipoprotein carrier protein (201 aa).

The signal sequence occupies residues 1 to 21; it reads MKKVLLTVCAIALFGSQAAWA.

It belongs to the LolA family. Monomer.

It is found in the periplasm. In terms of biological role, participates in the translocation of lipoproteins from the inner membrane to the outer membrane. Only forms a complex with a lipoprotein if the residue after the N-terminal Cys is not an aspartate (The Asp acts as a targeting signal to indicate that the lipoprotein should stay in the inner membrane). This chain is Outer-membrane lipoprotein carrier protein, found in Proteus mirabilis (strain HI4320).